The chain runs to 114 residues: Large ribosomal subunit protein P2 (114 aa).

The segment at 84-114 is disordered; sequence TDALQAGSKKGETKEGPKEESDEDMGFGLFD. Positions 92–102 are enriched in basic and acidic residues; the sequence is KKGETKEGPKE.

The protein belongs to the eukaryotic ribosomal protein P1/P2 family. In terms of assembly, P1 and P2 exist as dimers at the large ribosomal subunit. Post-translationally, phosphorylated.

In terms of biological role, plays an important role in the elongation step of protein synthesis. This Brugia malayi (Filarial nematode worm) protein is Large ribosomal subunit protein P2 (rpp-2).